The primary structure comprises 618 residues: Chaperone protein HscA homolog (618 aa).

It belongs to the heat shock protein 70 family.

Its function is as follows. Chaperone involved in the maturation of iron-sulfur cluster-containing proteins. Has a low intrinsic ATPase activity which is markedly stimulated by HscB. This is Chaperone protein HscA homolog from Variovorax paradoxus (strain S110).